The following is an 804-amino-acid chain: Leucine--tRNA ligase (804 aa).

Positions 40–51 match the 'HIGH' region motif; sequence PYPSGAGLHVGH. The short motif at 574-578 is the 'KMSKS' region element; that stretch reads KMSKS. Position 577 (K577) interacts with ATP.

It belongs to the class-I aminoacyl-tRNA synthetase family.

The protein resides in the cytoplasm. The catalysed reaction is tRNA(Leu) + L-leucine + ATP = L-leucyl-tRNA(Leu) + AMP + diphosphate. This Shouchella clausii (strain KSM-K16) (Alkalihalobacillus clausii) protein is Leucine--tRNA ligase.